We begin with the raw amino-acid sequence, 344 residues long: Dihydroorotase (344 aa).

Zn(2+) contacts are provided by histidine 14 and histidine 16. Substrate is bound by residues 16-18 (HLR) and asparagine 42. The Zn(2+) site is built by lysine 100, histidine 137, and histidine 175. Position 100 is an N6-carboxylysine (lysine 100). A substrate-binding site is contributed by histidine 137. Leucine 220 contacts substrate. Aspartate 248 provides a ligand contact to Zn(2+). Residue aspartate 248 is part of the active site. Residues histidine 252 and alanine 264 each coordinate substrate.

This sequence belongs to the metallo-dependent hydrolases superfamily. DHOase family. Class II DHOase subfamily. Homodimer. Zn(2+) serves as cofactor.

It catalyses the reaction (S)-dihydroorotate + H2O = N-carbamoyl-L-aspartate + H(+). Its pathway is pyrimidine metabolism; UMP biosynthesis via de novo pathway; (S)-dihydroorotate from bicarbonate: step 3/3. Catalyzes the reversible cyclization of carbamoyl aspartate to dihydroorotate. The sequence is that of Dihydroorotase from Roseobacter denitrificans (strain ATCC 33942 / OCh 114) (Erythrobacter sp. (strain OCh 114)).